We begin with the raw amino-acid sequence, 60 residues long: Large ribosomal subunit protein uL30 (60 aa).

The protein belongs to the universal ribosomal protein uL30 family. Part of the 50S ribosomal subunit.

In Azoarcus sp. (strain BH72), this protein is Large ribosomal subunit protein uL30.